A 120-amino-acid chain; its full sequence is Putative ferric transport system permease-like protein AfuB (120 aa).

At 1–38 (MESLPGQIDKSLDEASLSLRAGSLRTITHILLPLLRPA) the chain is on the cytoplasmic side. The 102-residue stretch at 1–102 (MESLPGQIDK…VVMLAIIFIF (102 aa)) folds into the ABC transmembrane type-1 domain. The chain crosses the membrane as a helical span at residues 39 to 59 (ILSALIYSFVRAITTVSAIVF). Residues 60–81 (LVTPDTRVATAYILNRVEDGEY) are Periplasmic-facing. A helical membrane pass occupies residues 82 to 102 (GVAIAYGSILIVVMLAIIFIF). Residues 103-120 (DWLIGESRTSRSKAKNQA) are Cytoplasmic-facing.

The protein belongs to the binding-protein-dependent transport system permease family. FbpB subfamily.

The protein localises to the cell inner membrane. Its function is as follows. A severely truncated paralog of the AfuB uptake protein, homologous only to the last 20% of the intact protein in Actinobacillus. The protein is Putative ferric transport system permease-like protein AfuB (afuB) of Escherichia coli (strain K12).